The sequence spans 419 residues: Erythromycin esterase type II (419 aa).

This enzyme confers resistance to erythromycin through inactivation by hydrolyzing the lactone ring of the antibiotic. The polypeptide is Erythromycin esterase type II (ereB) (Escherichia coli).